Reading from the N-terminus, the 615-residue chain is Zinc metalloproteinase R519 (615 aa).

The 611-residue stretch at 1–611 (MTYRSCIPQN…LDPQLRSRIL (611 aa)) folds into the Peptidase M13 domain. Histidine 454 serves as a coordination point for Zn(2+). The active site involves glutamate 455. The Zn(2+) site is built by histidine 458 and glutamate 513. Catalysis depends on aspartate 517, which acts as the Proton donor.

Belongs to the peptidase M13 family. The cofactor is Zn(2+).

Its function is as follows. Zinc metalloprotease. The polypeptide is Zinc metalloproteinase R519 (Acanthamoeba polyphaga (Amoeba)).